Consider the following 448-residue polypeptide: Homogentisate 1,2-dioxygenase (448 aa).

The Proton acceptor role is filled by His303. Residues His346 and Glu352 each contribute to the Fe cation site. Residues Tyr361 and His382 each contribute to the homogentisate site. His382 is a Fe cation binding site.

The protein belongs to the homogentisate dioxygenase family. As to quaternary structure, hexamer; dimer of trimers. The cofactor is Fe cation.

It catalyses the reaction homogentisate + O2 = 4-maleylacetoacetate + H(+). It participates in amino-acid degradation; L-phenylalanine degradation; acetoacetate and fumarate from L-phenylalanine: step 4/6. Its function is as follows. Involved in the catabolism of homogentisate (2,5-dihydroxyphenylacetate or 2,5-OH-PhAc), a central intermediate in the degradation of phenylalanine and tyrosine. Catalyzes the oxidative ring cleavage of the aromatic ring of homogentisate to yield maleylacetoacetate. The protein is Homogentisate 1,2-dioxygenase of Bradyrhizobium diazoefficiens (strain JCM 10833 / BCRC 13528 / IAM 13628 / NBRC 14792 / USDA 110).